We begin with the raw amino-acid sequence, 331 residues long: MDKYLIKMPVKLNSIEVTEKKISAKEERVKQTNAAKKQIATNNNKRKNQDTPEMIKDKENAESENPPKRRSSRVTRSMRSMAEDGPASPEKEIPKKLPFIKYSGAIKYFTESQEIAASADEVMQWVEKQINMDVVPMAFDMEWPFSFQTGPGKSSVIQICVDERCCYVYQLSKLNKIPAALAALINHPKVRLHGVNIKADFRKLERDFPEMSAEPLIEKCVDLGVWCNQVCETGGRWSLERLANFIAKKAMDKSKKVRMSKWHVIPLDENQLMYAAIDVYIGQVIYREIEQRETVKLKNEAEFKEQNGDAAFKLVKGLGENFLSKINEVTI.

Residues 27 to 92 (ERVKQTNAAK…EDGPASPEKE (66 aa)) form a disordered region. The span at 31-43 (QTNAAKKQIATNN) shows a compositional bias: polar residues. Residues 47-67 (KNQDTPEMIKDKENAESENPP) are compositionally biased toward basic and acidic residues. Phosphoserine occurs at positions 80 and 88. The 173-residue stretch at 118–290 (SADEVMQWVE…IGQVIYREIE (173 aa)) folds into the 3'-5' exonuclease domain. Mg(2+) contacts are provided by Asp140, Glu142, and Asp278.

This sequence belongs to the WRNexo family.

It localises to the nucleus. Its function is as follows. Has exonuclease activity on both single-stranded and duplex templates bearing overhangs, but not blunt ended duplex DNA, and cleaves in a 3'-5' direction. Essential for the formation of DNA replication focal centers. Has an important role in maintaining genome stability. The chain is 3'-5' exonuclease from Drosophila grimshawi (Hawaiian fruit fly).